The chain runs to 580 residues: TRAF-type zinc finger domain-containing protein 1 (580 aa).

At Ala-2 the chain carries N-acetylalanine. The segment at 27–103 (IHEIHCQRNI…DLELSVLKLK (77 aa)) adopts a TRAF-type zinc-finger fold. Phosphoserine is present on Ser-190. Residues 197-209 (TTNQRSMTAQFPI) are compositionally biased toward polar residues. A disordered region spans residues 197 to 236 (TTNQRSMTAQFPIQNNLLEEQERQERNRSRQTPKERGEDS). The span at 216 to 235 (EQERQERNRSRQTPKERGED) shows a compositional bias: basic and acidic residues. Phosphoserine occurs at positions 326, 414, and 429. Residues 392 to 580 (PATANNHVSE…GAGDAEEEEE (189 aa)) form a disordered region. The segment covering 409 to 419 (QPRETSPELPK) has biased composition (basic and acidic residues). A compositionally biased stretch (low complexity) spans 453–463 (PPNNTTAPPNR). Phosphoserine is present on Ser-469.

Interacts with MAVS, TICAM1, TRAF1, TRAF2, TRAF3 and TRAF6.

Functionally, negative feedback regulator that controls excessive innate immune responses. Regulates both Toll-like receptor 4 (TLR4) and DDX58/RIG1-like helicases (RLH) pathways. May inhibit the LTR pathway by direct interaction with TRAF6 and attenuation of NF-kappa-B activation. May negatively regulate the RLH pathway downstream from MAVS and upstream of NF-kappa-B and IRF3. The polypeptide is TRAF-type zinc finger domain-containing protein 1 (TRAFD1) (Bos taurus (Bovine)).